Consider the following 636-residue polypeptide: Methionine--tRNA ligase (636 aa).

Residues 12 to 22 (YYVNGDPHVGS) carry the 'HIGH' region motif. Zn(2+) is bound by residues Cys-127, Cys-130, Cys-145, and Cys-148. The 'KMSKS' region signature appears at 298 to 302 (KMSKS). An ATP-binding site is contributed by Lys-301. The tRNA-binding domain occupies 535-636 (EFNKIEIKVV…KTVEAGAIVS (102 aa)).

This sequence belongs to the class-I aminoacyl-tRNA synthetase family. MetG type 2A subfamily. As to quaternary structure, homodimer. It depends on Zn(2+) as a cofactor.

The protein localises to the cytoplasm. It carries out the reaction tRNA(Met) + L-methionine + ATP = L-methionyl-tRNA(Met) + AMP + diphosphate. Functionally, is required not only for elongation of protein synthesis but also for the initiation of all mRNA translation through initiator tRNA(fMet) aminoacylation. The sequence is that of Methionine--tRNA ligase (metG) from Fusobacterium nucleatum subsp. nucleatum (strain ATCC 25586 / DSM 15643 / BCRC 10681 / CIP 101130 / JCM 8532 / KCTC 2640 / LMG 13131 / VPI 4355).